The following is a 284-amino-acid chain: Bifunctional protein FolD (284 aa).

Residues 166 to 168 and Ile-232 each bind NADP(+); that span reads GAS.

It belongs to the tetrahydrofolate dehydrogenase/cyclohydrolase family. Homodimer.

The catalysed reaction is (6R)-5,10-methylene-5,6,7,8-tetrahydrofolate + NADP(+) = (6R)-5,10-methenyltetrahydrofolate + NADPH. It carries out the reaction (6R)-5,10-methenyltetrahydrofolate + H2O = (6R)-10-formyltetrahydrofolate + H(+). It functions in the pathway one-carbon metabolism; tetrahydrofolate interconversion. Its function is as follows. Catalyzes the oxidation of 5,10-methylenetetrahydrofolate to 5,10-methenyltetrahydrofolate and then the hydrolysis of 5,10-methenyltetrahydrofolate to 10-formyltetrahydrofolate. The polypeptide is Bifunctional protein FolD (Pseudomonas paraeruginosa (strain DSM 24068 / PA7) (Pseudomonas aeruginosa (strain PA7))).